The sequence spans 454 residues: Histidine--tRNA ligase (454 aa).

It belongs to the class-II aminoacyl-tRNA synthetase family. In terms of assembly, homodimer.

The protein resides in the cytoplasm. The catalysed reaction is tRNA(His) + L-histidine + ATP = L-histidyl-tRNA(His) + AMP + diphosphate + H(+). This Phocaeicola vulgatus (strain ATCC 8482 / DSM 1447 / JCM 5826 / CCUG 4940 / NBRC 14291 / NCTC 11154) (Bacteroides vulgatus) protein is Histidine--tRNA ligase.